We begin with the raw amino-acid sequence, 326 residues long: 4-hydroxythreonine-4-phosphate dehydrogenase (326 aa).

The substrate site is built by His134 and Thr135. Residues His164, His209, and His264 each coordinate a divalent metal cation. Substrate is bound by residues Lys272, Asn281, and Arg290.

Belongs to the PdxA family. As to quaternary structure, homodimer. The cofactor is Zn(2+). Requires Mg(2+) as cofactor. It depends on Co(2+) as a cofactor.

Its subcellular location is the cytoplasm. It carries out the reaction 4-(phosphooxy)-L-threonine + NAD(+) = 3-amino-2-oxopropyl phosphate + CO2 + NADH. Its pathway is cofactor biosynthesis; pyridoxine 5'-phosphate biosynthesis; pyridoxine 5'-phosphate from D-erythrose 4-phosphate: step 4/5. Catalyzes the NAD(P)-dependent oxidation of 4-(phosphooxy)-L-threonine (HTP) into 2-amino-3-oxo-4-(phosphooxy)butyric acid which spontaneously decarboxylates to form 3-amino-2-oxopropyl phosphate (AHAP). In Colwellia psychrerythraea (strain 34H / ATCC BAA-681) (Vibrio psychroerythus), this protein is 4-hydroxythreonine-4-phosphate dehydrogenase.